We begin with the raw amino-acid sequence, 441 residues long: Na(+)/H(+) antiporter NhaA 2 (441 aa).

Helical transmembrane passes span 34 to 54 (VGGA…NSPW), 77 to 97 (LTLG…VVGL), 115 to 135 (ALPM…FVAV), 146 to 166 (GWAI…AVIS), 176 to 196 (FLLT…AVFY), 199 to 219 (EINL…ALCV), 225 to 245 (SWWL…ESGV), 249 to 269 (VAGV…AGGP), 290 to 310 (VAVP…VSGL), 317 to 337 (PITL…IFLT), 355 to 375 (WIDV…SLLI), and 389 to 409 (FVKV…AVLL).

It belongs to the NhaA Na(+)/H(+) (TC 2.A.33) antiporter family.

It localises to the cell membrane. It catalyses the reaction Na(+)(in) + 2 H(+)(out) = Na(+)(out) + 2 H(+)(in). Na(+)/H(+) antiporter that extrudes sodium in exchange for external protons. The sequence is that of Na(+)/H(+) antiporter NhaA 2 from Mycobacterium sp. (strain MCS).